Reading from the N-terminus, the 138-residue chain is Dual specificity phosphatase ibp1 (138 aa).

Positions 19-133 (SPNEISIIDV…WKRRYGGQQG (115 aa)) constitute a Rhodanese domain. Residue Cys-70 is the Phosphocysteine intermediate of the active site.

It belongs to the MPI phosphatase family.

The protein localises to the cytoplasm. It localises to the nucleus. It catalyses the reaction O-phospho-L-tyrosyl-[protein] + H2O = L-tyrosyl-[protein] + phosphate. May play a role in DNA replication checkpoint via regulation of hsk1 or may act downstream of hsk1 in an S phase regulatory pathway. The chain is Dual specificity phosphatase ibp1 (ibp1) from Schizosaccharomyces pombe (strain 972 / ATCC 24843) (Fission yeast).